Here is a 531-residue protein sequence, read N- to C-terminus: UDP-glucuronosyltransferase 1A6 (531 aa).

The first 26 residues, 1-26 (MACLLPAAQTLPAGFLFLVLWASVLG), serve as a signal peptide directing secretion. N-linked (GlcNAc...) asparagine glycosylation is found at asparagine 293 and asparagine 431. Residues 489 to 505 (VIGFLLAIVLTVVFIVF) form a helical membrane-spanning segment.

It belongs to the UDP-glycosyltransferase family. As to expression, expressed in liver, kidney and at very low levels in colon.

Its subcellular location is the microsome. It is found in the endoplasmic reticulum membrane. The enzyme catalyses glucuronate acceptor + UDP-alpha-D-glucuronate = acceptor beta-D-glucuronoside + UDP + H(+). It carries out the reaction (5Z,8Z,11Z,14Z)-eicosatetraenoate + UDP-alpha-D-glucuronate = O-[(5Z),(8Z),(11Z),(14Z)-eicosatetraenoyl]-beta-D-glucuronate + UDP. The catalysed reaction is 15-hydroxy-(5Z,8Z,11Z,13E)-eicosatetraenoate + UDP-alpha-D-glucuronate = 15-O-(beta-D-glucuronosyl)-(5Z,8Z,11Z,14Z)-eicosatetraenoate + UDP + H(+). It catalyses the reaction (E)-ferulate + UDP-alpha-D-glucuronate = (E)-4-O-(beta-D-glucuronosyl)-ferulate + UDP + H(+). The enzyme catalyses (E)-ferulate + UDP-alpha-D-glucuronate = (E)-ferulic acid beta-D-glucuronate ester + UDP. In terms of biological role, UDP-glucuronosyltransferase (UGT) that catalyzes phase II biotransformation reactions in which lipophilic substrates are conjugated with glucuronic acid to facilitate their inactivation and excretion from the body. Essential for the elimination and detoxification of drugs, xenobiotics and endogenous compounds. Involved in the glucuronidation of arachidonic acid (AA) and AA-derived eicosanoids including 15-HETE and 20-HETE. Conjugates small planar phenolic molecules such as 4-nitrophenol, 1-naphthol, and 4-methylumbelliferone. The bulky phenol 4-hydroxybiphenyl, androgens and estrogens are not substrates. 2-hydroxybiphenyl is an excellent substrate. Involved in the glucuronidation of the phytochemical ferulic acid at the phenolic or the carboxylic acid group. The sequence is that of UDP-glucuronosyltransferase 1A6 from Mus musculus (Mouse).